The primary structure comprises 180 residues: MLAAKRYAEALIKLGQEEGKLEIFYEQLFKMFEIIKNNNEFNTIWFDLEMKRSEKKQRIKVFFGGDIDSYILNLLYLLIDKRREIILTYIPFYYKEIYDKIVGNVDVQVIVAHEIGSDVLNKISKWLLKKYGVKNPRFIVKVDKSIIGGIKLLFNNIEVDASIKGALDSMRKELVKIAIL.

Belongs to the ATPase delta chain family. F-type ATPases have 2 components, F(1) - the catalytic core - and F(0) - the membrane proton channel. F(1) has five subunits: alpha(3), beta(3), gamma(1), delta(1), epsilon(1). F(0) has three main subunits: a(1), b(2) and c(10-14). The alpha and beta chains form an alternating ring which encloses part of the gamma chain. F(1) is attached to F(0) by a central stalk formed by the gamma and epsilon chains, while a peripheral stalk is formed by the delta and b chains.

It localises to the cell membrane. Functionally, f(1)F(0) ATP synthase produces ATP from ADP in the presence of a proton or sodium gradient. F-type ATPases consist of two structural domains, F(1) containing the extramembraneous catalytic core and F(0) containing the membrane proton channel, linked together by a central stalk and a peripheral stalk. During catalysis, ATP synthesis in the catalytic domain of F(1) is coupled via a rotary mechanism of the central stalk subunits to proton translocation. Its function is as follows. This protein is part of the stalk that links CF(0) to CF(1). It either transmits conformational changes from CF(0) to CF(1) or is implicated in proton conduction. The protein is ATP synthase subunit delta of Caldicellulosiruptor bescii (strain ATCC BAA-1888 / DSM 6725 / KCTC 15123 / Z-1320) (Anaerocellum thermophilum).